The chain runs to 396 residues: Serine/threonine-protein kinase VRK1 (396 aa).

A Protein kinase domain is found at 37-317 (WKLGSPIGQG…LLDYVEKPLY (281 aa)). ATP contacts are provided by residues 43–51 (IGQGGFGCI) and Lys-71. A Glycyl lysine isopeptide (Lys-Gly) (interchain with G-Cter in SUMO2) cross-link involves residue Lys-71. Asp-177 serves as the catalytic Proton acceptor. A disordered region spans residues 352 to 396 (KPVAKKRKKEAEESVESSVEDMECSDKQTEEATQTRSKTRKRVQK). Acidic residues predominate over residues 364 to 374 (ESVESSVEDME). Position 376 is a phosphoserine (Ser-376). A required for interaction with the nucleosome region spans residues 387–393 (RSKTRKR).

It belongs to the protein kinase superfamily. CK1 Ser/Thr protein kinase family. VRK subfamily. In terms of assembly, interacts with HDAC1, KAT2B, SETDB1, KDM3A and KDM4A. Associates with the nucleosome through interactions with nucleosome DNA, histone H2A and histone H2B; the interaction with H2A and H2B is mediated by the nucleosome acidic patch, a cluster of negatively charged residues of H2A and H2B forming a cleft within the nucleosome core. Post-translationally, autophosphorylated at various serine and threonine residues. Autophosphorylation does not impair its ability to phosphorylate p53/TP53. Phosphorylation by PLK3 leads to induction of Golgi fragmentation during mitosis.

It localises to the nucleus. The protein resides in the cytoplasm. It is found in the cajal body. The catalysed reaction is L-seryl-[protein] + ATP = O-phospho-L-seryl-[protein] + ADP + H(+). It carries out the reaction L-threonyl-[protein] + ATP = O-phospho-L-threonyl-[protein] + ADP + H(+). Active in presence of Mn(2+), Mg(2+) and Zn(2+), but is not functional with Ca(2+) or Cu(2+). Has a higher affinity for Mn(2+) than for Mg(2+). RAN inhibits its autophosphorylation and its ability to phosphorylate histone H3. In terms of biological role, serine/threonine kinase involved in the regulation of key cellular processes including the cell cycle, nuclear condensation, transcription regulation, and DNA damage response. Controls chromatin organization and remodeling by mediating phosphorylation of histone H3 on 'Thr-4' and histone H2AX (H2aXT4ph). It also phosphorylates KAT5 in response to DNA damage, promoting KAT5 association with chromatin and histone acetyltransferase activity. Is involved in the regulation of cell cycle progression of neural progenitors, and is required for proper cortical neuronal migration. Is involved in neurite elongation and branching in motor neurons, and has an essential role in Cajal bodies assembly, acting through COIL phosphorylation and the control of coilin degradation. Involved in Golgi disassembly during the cell cycle: following phosphorylation by PLK3 during mitosis, it is required to induce Golgi fragmentation. Phosphorylates BANF1: disrupts its ability to bind DNA, reduces its binding to LEM domain-containing proteins and causes its relocalization from the nucleus to the cytoplasm. Phosphorylates TP53BP1 and p53/TP53 on 'Thr-18', preventing the interaction between p53/TP53 and MDM2. Phosphorylates ATF2 which activates its transcriptional activity. Phosphorylates JUN. The polypeptide is Serine/threonine-protein kinase VRK1 (VRK1) (Bos taurus (Bovine)).